We begin with the raw amino-acid sequence, 142 residues long: Large ribosomal subunit protein uL24 (142 aa).

The span at 1-11 shows a compositional bias: polar residues; the sequence is MKVNPFVSSDS. Residues 1-24 are disordered; that stretch reads MKVNPFVSSDSGKSRKAHFNAPSH.

It belongs to the universal ribosomal protein uL24 family.

The polypeptide is Large ribosomal subunit protein uL24 (rpl-26) (Caenorhabditis elegans).